The following is a 579-amino-acid chain: Multidrug resistance-like ATP-binding protein MdlA (579 aa).

Residues 18 to 303 (YTIAIFLLIS…FAWMFNIIER (286 aa)) form the ABC transmembrane type-1 domain. Transmembrane regions (helical) follow at residues 20-40 (IAIF…KLIG), 53-73 (KAPI…IYIL), 134-154 (GVLT…VMIT), 155-175 (QISW…AIII), 247-267 (IIHL…SYMI), and 281-301 (ILYL…FNII). Residues 338 to 572 (VKINYFKYSK…LKQWYGKTYL (235 aa)) form the ABC transporter domain. 370–377 (GPTGSGKS) contacts ATP.

It belongs to the ABC transporter superfamily. Drug exporter-2 (TC 3.A.1.117) family.

The protein resides in the cell membrane. It carries out the reaction ATP + H2O + xenobioticSide 1 = ADP + phosphate + xenobioticSide 2.. The protein is Multidrug resistance-like ATP-binding protein MdlA (mdlA) of Buchnera aphidicola subsp. Baizongia pistaciae (strain Bp).